A 124-amino-acid chain; its full sequence is Small ribosomal subunit protein uS12 (124 aa).

The interval 1–32 (MPTISQLIRHGRQKQKKRTKSPALKSSPQRRG) is disordered. Residues 9 to 20 (RHGRQKQKKRTK) show a composition bias toward basic residues. At aspartate 89 the chain carries 3-methylthioaspartic acid.

It belongs to the universal ribosomal protein uS12 family. In terms of assembly, part of the 30S ribosomal subunit. Contacts proteins S8 and S17. May interact with IF1 in the 30S initiation complex.

Functionally, with S4 and S5 plays an important role in translational accuracy. Its function is as follows. Interacts with and stabilizes bases of the 16S rRNA that are involved in tRNA selection in the A site and with the mRNA backbone. Located at the interface of the 30S and 50S subunits, it traverses the body of the 30S subunit contacting proteins on the other side and probably holding the rRNA structure together. The combined cluster of proteins S8, S12 and S17 appears to hold together the shoulder and platform of the 30S subunit. The chain is Small ribosomal subunit protein uS12 from Leptospira borgpetersenii serovar Hardjo-bovis (strain JB197).